Reading from the N-terminus, the 145-residue chain is L-alanine exporter AlaE (145 aa).

Transmembrane regions (helical) follow at residues 16-36, 42-62, 86-106, and 111-131; these read FALV…LSGM, LSSR…YGLY, LFAY…VIGA, and ILTA…TYGY.

It belongs to the AlaE exporter family.

The protein localises to the cell inner membrane. Functionally, exports L-alanine. In Pectobacterium parmentieri (strain WPP163) (Pectobacterium wasabiae (strain WPP163)), this protein is L-alanine exporter AlaE.